The chain runs to 290 residues: Sodium/potassium-transporting ATPase subunit beta-2 (290 aa).

Over 1 to 39 (MVIQKEKKSCGQVVEEWKEFVWNPRTHQFMGRTGTSWAF) the chain is Cytoplasmic. A helical; Signal-anchor for type II membrane protein transmembrane segment spans residues 40-67 (ILLFYLVFYGFLTAMFTLTMWVMLQTVS). Residues 68–290 (DHTPKYQDRL…VAFKLRINKA (223 aa)) lie on the Extracellular side of the membrane. N-linked (GlcNAc...) asparagine glycosylation is found at asparagine 96 and asparagine 118. Cysteine 129 and cysteine 150 are joined by a disulfide. N-linked (GlcNAc...) asparagine glycosylation is found at asparagine 153 and asparagine 159. Cysteine 160 and cysteine 177 form a disulfide bridge. 3 N-linked (GlcNAc...) asparagine glycosylation sites follow: asparagine 193, asparagine 197, and asparagine 238. Residues 193 to 290 (NQSMNVTCVG…VAFKLRINKA (98 aa)) form an immunoglobulin-like region. Cysteine 200 and cysteine 261 are disulfide-bonded.

This sequence belongs to the X(+)/potassium ATPases subunit beta family. As to quaternary structure, the sodium/potassium-transporting ATPase is composed of a catalytic alpha subunit, an auxiliary non-catalytic beta subunit and an additional regulatory subunit. Interacts with isoform 2 of BSG. In terms of tissue distribution, highly expressed in brain (at protein level).

It is found in the cell membrane. This is the non-catalytic component of the active enzyme, which catalyzes the hydrolysis of ATP coupled with the exchange of Na(+) and K(+) ions across the plasma membrane. The exact function of the beta-2 subunit is not known. Functionally, mediates cell adhesion of neurons and astrocytes, and promotes neurite outgrowth. This chain is Sodium/potassium-transporting ATPase subunit beta-2 (Atp1b2), found in Rattus norvegicus (Rat).